Here is a 446-residue protein sequence, read N- to C-terminus: NADH-dependent phenylglyoxylate dehydrogenase subunit beta (446 aa).

4Fe-4S ferredoxin-type domains lie at 6–35 (STIA…TDDI), 49–80 (ADKT…KDGT), 82–111 (GVIG…LDEA), and 109–141 (DEAT…HITT).

As to quaternary structure, dimer of heteropentamers composed of an alpha (PadG), a beta (PadI), a gamma (PadE), a delta (PadF) and an epsilon (PadH) subunit. [4Fe-4S] cluster is required as a cofactor.

It catalyses the reaction phenylglyoxylate + NAD(+) + CoA = benzoyl-CoA + CO2 + NADH. Its activity is regulated as follows. Activated by magnesium ions and thiamine diphosphate. Functionally, involved in the anaerobic metabolism of phenylalanine and phenylacetate. Catalyzes the oxidative decarboxylation of phenylglyoxylate to benzoyl-CoA and CO(2). It can also react slowly with 2-oxo-3-methylbutanoate and use different electron acceptors such as benzyl viologen, methyl viologen, FAD or FMN, but NAD seems to be the physiological electron acceptor. Also catalyzes an isotope exchange between CO(2) and the carboxyl group which proves partial or complete reversibility of the oxidative decarboxylation reaction. The chain is NADH-dependent phenylglyoxylate dehydrogenase subunit beta (padI) from Aromatoleum evansii (Azoarcus evansii).